Here is a 460-residue protein sequence, read N- to C-terminus: Hydroxymethylglutaryl-CoA synthase MYCGRDRAFT_54740 (460 aa).

Ala35 is a binding site for (3S)-3-hydroxy-3-methylglutaryl-CoA. Glu86 serves as the catalytic Proton donor/acceptor. Cys120, Asn158, Thr162, Ser212, His262, Lys271, Asn339, and Ser373 together coordinate (3S)-3-hydroxy-3-methylglutaryl-CoA. Cys120 acts as the Acyl-thioester intermediate in catalysis. Catalysis depends on His262, which acts as the Proton donor/acceptor.

Belongs to the thiolase-like superfamily. HMG-CoA synthase family.

The enzyme catalyses acetoacetyl-CoA + acetyl-CoA + H2O = (3S)-3-hydroxy-3-methylglutaryl-CoA + CoA + H(+). Its pathway is siderophore biosynthesis. Functionally, hydroxymethylglutaryl-CoA synthase involved in the biosynthesis of a ferrichrome A-like siderophors which may contribute to organismal virulence. The first step of siderophore biosynthesis is performed by the HMG-CoA synthase (HMGS) MYCGRDRAFT_54740 which catalyzes the generation of HMG-CoA and CoA using acetoacetyl-CoA and acetyl-CoA as substrates. The enoyl-CoA isomerase/hydratase MYCGRDRAFT_76805 then catalyzes the conversion of HMG-CoA to methylglutaconyl-CoA. The acyltransferase MYCGRDRAFT_85486 then fuses methylglutaconyl-CoA with hydroxyornithine to yield methylglutaconyl hydroxyornithine. Methylglutaconyl hydroxyornithine is then available for use by the nonribosomal peptide synthetase NRPS2 to generate the ferrichrome A-like siderophore. The sequence is that of Hydroxymethylglutaryl-CoA synthase MYCGRDRAFT_54740 (ERG13) from Zymoseptoria tritici (strain CBS 115943 / IPO323) (Speckled leaf blotch fungus).